The primary structure comprises 423 residues: Probable WRKY transcription factor 58 (423 aa).

3 disordered regions span residues 91–128 (SSAH…AVHG), 142–171 (RNHY…DGYN), and 215–284 (IYKG…GVST). 2 stretches are compositionally biased toward low complexity: residues 99–111 (QPRQ…PQRP) and 144–162 (HYNN…VVNV). Positions 161–225 (NVDKPADDGY…YKGQHDHERP (65 aa)) form a DNA-binding region, WRKY 1. Acidic residues predominate over residues 259 to 271 (DDDDDDDEDDEDL). A DNA-binding region (WRKY 2) is located at residues 300-365 (SEVDLLDDGY…YEGKHNHDVP (66 aa)).

It is found in the nucleus. Transcription factor. Interacts specifically with the W box (5'-(T)TGAC[CT]-3'), a frequently occurring elicitor-responsive cis-acting element. This Arabidopsis thaliana (Mouse-ear cress) protein is Probable WRKY transcription factor 58 (WRKY58).